We begin with the raw amino-acid sequence, 2183 residues long: Genome polyprotein (2183 aa).

Glycine 2 carries N-myristoyl glycine; by host lipidation. Over 2–1493 (GAQVSTQKTG…HVSRAFICLQ (1492 aa)) the chain is Cytoplasmic. The interval 566–582 (FYQGPTEESVERAMGRV) is amphipathic alpha-helix. Active-site for protease 2A activity residues include histidine 870 and aspartate 888. Residues cysteine 905 and cysteine 907 each coordinate Zn(2+). Cysteine 959 functions as the For protease 2A activity in the catalytic mechanism. Zn(2+) contacts are provided by cysteine 965 and histidine 967. The membrane-binding stretch occupies residues 1099–1171 (NNGWLKKFTE…EQSAPSQSDQ (73 aa)). Residues 1099 to 1237 (NNGWLKKFTE…SPGAGKSVAT (139 aa)) form an oligomerization region. The segment at 1120 to 1124 (AVKIQ) is RNA-binding. Positions 1203-1359 (EKKMSNYIQF…SMYSQNGKIN (157 aa)) constitute an SF3 helicase domain. Residues cysteine 1367, cysteine 1379, and cysteine 1384 each contribute to the Zn(2+) site. The segment at 1367–1384 (CDEECCPVNFKRCCPLVC) adopts a C4-type; degenerate zinc-finger fold. Positions 1411–1418 (EYNHRHSV) are RNA-binding. An oligomerization region spans residues 1422–1427 (LEALFQ). Residues 1494–1509 (ALTTFVSVAGIIYIIY) lie within the membrane without spanning it. Residues 1510–2183 (KLFAGFQGAY…TLRRKWLDSF (674 aa)) are Cytoplasmic-facing. Tyrosine 1519 bears the O-(5'-phospho-RNA)-tyrosine mark. One can recognise a Peptidase C3 domain in the interval 1539–1717 (GPAFEFAVAM…FSAGLLKHYF (179 aa)). Residues histidine 1578, glutamate 1609, and cysteine 1685 each act as for protease 3C activity in the active site. The region spanning 1948-2064 (GHLIAFDYSG…SYPWPIDASL (117 aa)) is the RdRp catalytic domain. Residues aspartate 1954 and aspartate 2050 each coordinate Mg(2+).

It belongs to the picornaviruses polyprotein family. In terms of assembly, interacts with capsid protein VP1 and capsid protein VP3 to form heterotrimeric protomers. As to quaternary structure, interacts with capsid protein VP0, and capsid protein VP3 to form heterotrimeric protomers. Five protomers subsequently associate to form pentamers which serve as building blocks for the capsid. Interacts with capsid protein VP2, capsid protein VP3 and capsid protein VP4 following cleavage of capsid protein VP0. Interacts with host CXADR. Interacts with capsid protein VP1 and capsid protein VP3 in the mature capsid. In terms of assembly, interacts with capsid protein VP0 and capsid protein VP1 to form heterotrimeric protomers. Five protomers subsequently associate to form pentamers which serve as building blocks for the capsid. Interacts with capsid protein VP4 in the mature capsid. Interacts with protein 2C; this interaction may be important for virion morphogenesis. As to quaternary structure, interacts with capsid protein VP1 and capsid protein VP3. Homodimer. In terms of assembly, homohexamer; forms a hexameric ring structure with 6-fold symmetry characteristic of AAA+ ATPases. Interacts (via N-terminus) with host RTN3 (via reticulon domain); this interaction is important for viral replication. Interacts with capsid protein VP3; this interaction may be important for virion morphogenesis. As to quaternary structure, interacts with protein 3CD. Homodimer. Interacts with host GBF1. Interacts (via GOLD domain) with host ACBD3 (via GOLD domain); this interaction allows the formation of a viral protein 3A/ACBD3 heterotetramer with a 2:2 stoichiometry, which will stimulate the recruitment of host PI4KB in order to synthesize PI4P at the viral RNA replication sites. In terms of assembly, interacts with RNA-directed RNA polymerase. As to quaternary structure, interacts with protein 3AB and with RNA-directed RNA polymerase. Interacts with Viral protein genome-linked and with protein 3CD. It depends on Mg(2+) as a cofactor. Post-translationally, specific enzymatic cleavages in vivo by the viral proteases yield processing intermediates and the mature proteins. In terms of processing, myristoylation is required for the formation of pentamers during virus assembly. Further assembly of 12 pentamers and a molecule of genomic RNA generates the provirion. During virion maturation, immature virions are rendered infectious following cleavage of VP0 into VP4 and VP2. This maturation seems to be an autocatalytic event triggered by the presence of RNA in the capsid and it is followed by a conformational change infectious virion. Post-translationally, myristoylation is required during RNA encapsidation and formation of the mature virus particle. In terms of processing, VPg is uridylylated by the polymerase into VPg-pUpU. This acts as a nucleotide-peptide primer for the genomic RNA replication.

It is found in the virion. It localises to the host cytoplasm. The protein resides in the host cytoplasmic vesicle membrane. Its subcellular location is the host nucleus. It carries out the reaction a ribonucleoside 5'-triphosphate + H2O = a ribonucleoside 5'-diphosphate + phosphate + H(+). The catalysed reaction is Selective cleavage of Tyr-|-Gly bond in the picornavirus polyprotein.. It catalyses the reaction RNA(n) + a ribonucleoside 5'-triphosphate = RNA(n+1) + diphosphate. The enzyme catalyses Selective cleavage of Gln-|-Gly bond in the poliovirus polyprotein. In other picornavirus reactions Glu may be substituted for Gln, and Ser or Thr for Gly.. Replication or transcription is subject to high level of random mutations by the nucleotide analog ribavirin. Forms an icosahedral capsid of pseudo T=3 symmetry with capsid proteins VP2 and VP3. The capsid is 300 Angstroms in diameter, composed of 60 copies of each capsid protein and enclosing the viral positive strand RNA genome. Capsid protein VP1 mainly forms the vertices of the capsid. Capsid protein VP1 interacts with host CXADR to provide virion attachment to target host cells. This attachment induces virion internalization. Tyrosine kinases are probably involved in the entry process. After binding to its receptor, the capsid undergoes conformational changes. Capsid protein VP1 N-terminus (that contains an amphipathic alpha-helix) and capsid protein VP4 are externalized. Together, they shape a pore in the host membrane through which viral genome is translocated to host cell cytoplasm. Functionally, forms an icosahedral capsid of pseudo T=3 symmetry with capsid proteins VP2 and VP3. The capsid is 300 Angstroms in diameter, composed of 60 copies of each capsid protein and enclosing the viral positive strand RNA genome. In terms of biological role, lies on the inner surface of the capsid shell. After binding to the host receptor, the capsid undergoes conformational changes. Capsid protein VP4 is released, Capsid protein VP1 N-terminus is externalized, and together, they shape a pore in the host membrane through which the viral genome is translocated into the host cell cytoplasm. Its function is as follows. Component of immature procapsids, which is cleaved into capsid proteins VP4 and VP2 after maturation. Allows the capsid to remain inactive before the maturation step. Cysteine protease that cleaves viral polyprotein and specific host proteins. It is responsible for the autocatalytic cleavage between the P1 and P2 regions, which is the first cleavage occurring in the polyprotein. Also cleaves the host translation initiation factor EIF4G1, in order to shut down the capped cellular mRNA translation. Inhibits the host nucleus-cytoplasm protein and RNA trafficking by cleaving host members of the nuclear pores. Counteracts stress granule formation probably by antagonizing its assembly or promoting its dissassembly. Cleaves and inhibits host IFIH1/MDA5, thereby inhibiting the type-I IFN production and the establishment of the antiviral state. Cleaves and inhibits host MAVS, thereby inhibiting the type-I IFN production and the establishment of the antiviral state. Functionally, plays an essential role in the virus replication cycle by acting as a viroporin. Creates a pore in the host endoplasmic reticulum and as a consequence releases Ca2+ in the cytoplasm of infected cell. In turn, high levels of cytoplasmic calcium may trigger membrane trafficking and transport of viral ER-associated proteins to viroplasms, sites of viral genome replication. In terms of biological role, induces and associates with structural rearrangements of intracellular membranes. Displays RNA-binding, nucleotide binding and NTPase activities. May play a role in virion morphogenesis and viral RNA encapsidation by interacting with the capsid protein VP3. Its function is as follows. Localizes the viral replication complex to the surface of membranous vesicles. Together with protein 3CD binds the Cis-Active RNA Element (CRE) which is involved in RNA synthesis initiation. Acts as a cofactor to stimulate the activity of 3D polymerase, maybe through a nucleid acid chaperone activity. Localizes the viral replication complex to the surface of membranous vesicles. It inhibits host cell endoplasmic reticulum-to-Golgi apparatus transport and causes the disassembly of the Golgi complex, possibly through GBF1 interaction. This would result in depletion of MHC, trail receptors and IFN receptors at the host cell surface. Plays an essential role in viral RNA replication by recruiting ACBD3 and PI4KB at the viral replication sites, thereby allowing the formation of the rearranged membranous structures where viral replication takes place. Functionally, acts as a primer for viral RNA replication and remains covalently bound to viral genomic RNA. VPg is uridylylated prior to priming replication into VPg-pUpU. The oriI viral genomic sequence may act as a template for this. The VPg-pUpU is then used as primer on the genomic RNA poly(A) by the RNA-dependent RNA polymerase to replicate the viral genome. During genome replication, the VPg-RNA linkage is removed by the host TDP2, thereby accelerating replication. During the late stage of the replication cycle, host TDP2 is excluded from sites of viral RNA synthesis and encapsidation, allowing for the generation of progeny virions. In terms of biological role, involved in the viral replication complex and viral polypeptide maturation. It exhibits protease activity with a specificity and catalytic efficiency that is different from protease 3C. Protein 3CD lacks polymerase activity. Protein 3CD binds to the 5'UTR of the viral genome. Its function is as follows. Replicates the viral genomic RNA on the surface of intracellular membranes. May form linear arrays of subunits that propagate along a strong head-to-tail interaction called interface-I. Covalently attaches UMP to a tyrosine of VPg, which is used to prime RNA synthesis. The positive stranded RNA genome is first replicated at virus induced membranous vesicles, creating a dsRNA genomic replication form. This dsRNA is then used as template to synthesize positive stranded RNA genomes. ss(+)RNA genomes are either translated, replicated or encapsidated. Major viral protease that mediates proteolytic processing of the polyprotein. Cleaves host EIF5B, contributing to host translation shutoff. Also cleaves host PABPC1, contributing to host translation shutoff. Cleaves host NLRP1, triggers host N-glycine-mediated degradation of the autoinhibitory NLRP1 N-terminal fragment. This chain is Genome polyprotein, found in Coxsackievirus B4 (strain JVB / Benschoten / New York/51).